A 467-amino-acid polypeptide reads, in one-letter code: Ammonium transporter Rh type C (467 aa).

Residues Met1–Leu3 are Cytoplasmic-facing. The chain crosses the membrane as a helical span at residues Arg4–Val24. The Extracellular segment spans residues Arg25–Tyr55. N-linked (GlcNAc...) asparagine glycosylation occurs at Asn42. The chain crosses the membrane as a helical span at residues Pro56 to Leu76. Residues Lys77–Gly80 lie on the Cytoplasmic side of the membrane. A helical membrane pass occupies residues Phe81–Met101. The Extracellular portion of the chain corresponds to Gln102–Ser119. Residues Leu120–Gly139 form a helical membrane-spanning segment. The Cytoplasmic segment spans residues Lys140–Gln145. A helical membrane pass occupies residues Ile146–Leu168. Residues His169–Ala173 are Extracellular-facing. A helical transmembrane segment spans residues Gly174 to Leu194. Residues Asn195–Asp213 lie on the Cytoplasmic side of the membrane. Residues Leu214–Val234 form a helical membrane-spanning segment. Over Ser235–Ala245 the chain is Extracellular. The chain crosses the membrane as a helical span at residues Ile246–Val266. Residues Asn267–Lys271 lie on the Cytoplasmic side of the membrane. The chain crosses the membrane as a helical span at residues Leu272–Ala292. At Glu293–Met295 the chain is on the extracellular side. The helical transmembrane segment at Leu296 to Phe316 threads the bilayer. Residues Thr317–Asn337 are Cytoplasmic-facing. Residues Leu338–Thr358 traverse the membrane as a helical segment. Over Glu359–Ala390 the chain is Extracellular. A helical transmembrane segment spans residues Ala391 to Leu411. Residues Lys412–Lys467 lie on the Cytoplasmic side of the membrane.

It belongs to the ammonium transporter (TC 2.A.49) family. Rh subfamily. As to quaternary structure, homotrimer.

It is found in the apical cell membrane. Its function is as follows. Functions as an ammonia transporter. The polypeptide is Ammonium transporter Rh type C (rhcg) (Xenopus tropicalis (Western clawed frog)).